The following is a 230-amino-acid chain: Ribonuclease HII (230 aa).

The RNase H type-2 domain maps to 1 to 224; sequence MIIIGIDEAG…CKRILDKSKQ (224 aa). A divalent metal cation-binding residues include D7, E8, and D112.

The protein belongs to the RNase HII family. The cofactor is Mn(2+). Mg(2+) is required as a cofactor.

The protein localises to the cytoplasm. It carries out the reaction Endonucleolytic cleavage to 5'-phosphomonoester.. Endonuclease that specifically degrades the RNA of RNA-DNA hybrids. This is Ribonuclease HII (rnhB) from Methanocaldococcus jannaschii (strain ATCC 43067 / DSM 2661 / JAL-1 / JCM 10045 / NBRC 100440) (Methanococcus jannaschii).